Consider the following 264-residue polypeptide: MRTLWMALCALSRLWPGAQAGCAEAGRCCPGRDPACFARGWRLDRVYGTCFCDQACRFTGDCCFDYDRACPARPCFVGEWSPWSGCADQCKPTTRVRRRSVQQEPQNGGAPCPPLEERAGCLEYSTPQGQDCGHTYVPAFITTSAFNKERTRQATSPHWSTHTEDAGYCMEFKTESLTPHCALENWPLTRWMQYLREGYTVCVDCQPPAMNSVSLRCSGDGLDSDGNQTLHWQAIGNPRCQGTWKKVRRVDQCSCPAVHSFIFI.

Positions 1 to 20 (MRTLWMALCALSRLWPGAQA) are cleaved as a signal peptide. Positions 24-75 (EAGRCCPGRDPACFARGWRLDRVYGTCFCDQACRFTGDCCFDYDRACPARPC) constitute an SMB domain. Disulfide bonds link C28/C36, C28/C52, C36/C70, C50/C52, C50/C63, C56/C62, and C63/C70. The 54-residue stretch at 74 to 127 (PCFVGEWSPWSGCADQCKPTTRVRRRSVQQEPQNGGAPCPPLEERAGCLEYSTP) folds into the TSP type-1 domain. N227 is a glycosylation site (N-linked (GlcNAc...) asparagine).

Belongs to the thrombospondin family. As to expression, detected in aorta extracellular matrix (at protein level).

Its subcellular location is the secreted. The protein resides in the extracellular space. It localises to the extracellular matrix. The protein is Somatomedin-B and thrombospondin type-1 domain-containing protein (SBSPON) of Homo sapiens (Human).